The following is a 971-amino-acid chain: uncharacterized protein (971 aa).

Positions 1–24 (MQSNLLKVLGVLAIVATLVCFIFA) are cleaved as a signal peptide. The interval 127–146 (RTRPGKSNLDDSNQMIPIPR) is disordered. Transmembrane regions (helical) follow at residues 611–631 (IKAILILYVMTYGAMFLLGFA), 721–741 (LGLSGIIYFIITFIAVCIVII), 753–773 (AFMATCILIGIAPLFISFLLF), 795–815 (VVMMAGIIVLTQLFTIYLDFV), 832–852 (FIGTILPIALLNVPIFCINWF), and 865–885 (GVNMQNIVALVIIAYGMYGYV). Residues 933–944 (TSRAKSRLKQRN) show a composition bias toward basic residues. The interval 933–971 (TSRAKSRLKQRNRTLEHAEQNSKKYMKKIGENTNEGTLK) is disordered. Residues 945–954 (RTLEHAEQNS) are compositionally biased toward basic and acidic residues.

It belongs to the TrbL/VirB6 family.

The protein localises to the cell membrane. This is an uncharacterized protein from Rickettsia typhi (strain ATCC VR-144 / Wilmington).